The sequence spans 154 residues: Cyclin-dependent protein kinase inhibitor SMR11 (154 aa).

Residues 1–44 (MEQEEPCEAKETASSSIEPKTPNPNVPDSIPAIDSDSSLSEEEI) are disordered. A compositionally biased stretch (low complexity) spans 27–38 (PDSIPAIDSDSS).

Interacts with CYCB2-4.

Functionally, probable cyclin-dependent protein kinase (CDK) inhibitor that functions as a repressor of mitosis in the endoreduplication cell cycle. This chain is Cyclin-dependent protein kinase inhibitor SMR11, found in Arabidopsis thaliana (Mouse-ear cress).